We begin with the raw amino-acid sequence, 314 residues long: Olfactory receptor 14K1 (314 aa).

Topologically, residues 1–23 (MTNQTQMMEFLLVRFTENWVLLR) are extracellular. An N-linked (GlcNAc...) asparagine glycan is attached at Asn-3. A helical membrane pass occupies residues 24-44 (LHALLFSLIYLTAVLMNLVII). The Cytoplasmic segment spans residues 45-52 (LLMILDHR). A helical transmembrane segment spans residues 53-73 (LHMAMYFFLRHLSFLDLCLIS). Residues 74–97 (ATVPKSILNSVASTDSISFLGCVL) lie on the Extracellular side of the membrane. Residues Cys-95 and Cys-187 are joined by a disulfide bond. A helical transmembrane segment spans residues 98-118 (QLFLVVLLAGSEIGILTAMSY). Over 119-131 (DRYAAICCPLHCE) the chain is Cytoplasmic. A helical transmembrane segment spans residues 132–152 (AVMSRGLCVQLMALSWLNRGA). Residues 153 to 194 (LGLLYTAGTFSLNFYGSDELHQFFCDVPALLKLTCSKEHAII) lie on the Extracellular side of the membrane. The helical transmembrane segment at 195–215 (SVSVAIGVCYAFSCLVCIVVS) threads the bilayer. Residues 216–235 (YVYIFSAVLRISQRQRQSKA) lie on the Cytoplasmic side of the membrane. A helical transmembrane segment spans residues 236–256 (FSNCVPHLIVVTVFLVTGAVA). Residues 257-269 (YLKPGSDAPSILD) lie on the Extracellular side of the membrane. The helical transmembrane segment at 270–290 (LLVSVFYSVAPPTLNPVIYCL) threads the bilayer. Residues 291–314 (KNKDIKSALSKVLWNVRSSGVMKR) lie on the Cytoplasmic side of the membrane.

Belongs to the G-protein coupled receptor 1 family.

The protein localises to the cell membrane. Its function is as follows. Odorant receptor. In Homo sapiens (Human), this protein is Olfactory receptor 14K1 (OR14K1).